A 406-amino-acid polypeptide reads, in one-letter code: Cysteine desulfurase (406 aa).

At Lys-226 the chain carries N6-(pyridoxal phosphate)lysine. Cys-364 (cysteine persulfide intermediate) is an active-site residue.

This sequence belongs to the class-V pyridoxal-phosphate-dependent aminotransferase family. Csd subfamily. In terms of assembly, homodimer. Interacts with SufE and the SufBCD complex composed of SufB, SufC and SufD. The interaction with SufE is required to mediate the direct transfer of the sulfur atom from the S-sulfanylcysteine. Pyridoxal 5'-phosphate is required as a cofactor.

It localises to the cytoplasm. The catalysed reaction is (sulfur carrier)-H + L-cysteine = (sulfur carrier)-SH + L-alanine. It catalyses the reaction L-selenocysteine + AH2 = hydrogenselenide + L-alanine + A + H(+). Its pathway is cofactor biosynthesis; iron-sulfur cluster biosynthesis. Functionally, cysteine desulfurases mobilize the sulfur from L-cysteine to yield L-alanine, an essential step in sulfur metabolism for biosynthesis of a variety of sulfur-containing biomolecules. Component of the suf operon, which is activated and required under specific conditions such as oxidative stress and iron limitation. Acts as a potent selenocysteine lyase in vitro, that mobilizes selenium from L-selenocysteine. Selenocysteine lyase activity is however unsure in vivo. This Klebsiella pneumoniae subsp. pneumoniae (strain ATCC 700721 / MGH 78578) protein is Cysteine desulfurase.